A 335-amino-acid chain; its full sequence is Pyridoxal 5'-phosphate synthase subunit PdxS (335 aa).

Asp-30 is a D-ribose 5-phosphate binding site. The Schiff-base intermediate with D-ribose 5-phosphate role is filled by Lys-87. Gly-159 is a binding site for D-ribose 5-phosphate. Arg-171 provides a ligand contact to D-glyceraldehyde 3-phosphate. Residues Gly-257 and 278-279 (GS) each bind D-ribose 5-phosphate.

The protein belongs to the PdxS/SNZ family. As to quaternary structure, in the presence of PdxT, forms a dodecamer of heterodimers.

The catalysed reaction is aldehydo-D-ribose 5-phosphate + D-glyceraldehyde 3-phosphate + L-glutamine = pyridoxal 5'-phosphate + L-glutamate + phosphate + 3 H2O + H(+). Its pathway is cofactor biosynthesis; pyridoxal 5'-phosphate biosynthesis. Functionally, catalyzes the formation of pyridoxal 5'-phosphate from ribose 5-phosphate (RBP), glyceraldehyde 3-phosphate (G3P) and ammonia. The ammonia is provided by the PdxT subunit. Can also use ribulose 5-phosphate and dihydroxyacetone phosphate as substrates, resulting from enzyme-catalyzed isomerization of RBP and G3P, respectively. The sequence is that of Pyridoxal 5'-phosphate synthase subunit PdxS from Thermococcus kodakarensis (strain ATCC BAA-918 / JCM 12380 / KOD1) (Pyrococcus kodakaraensis (strain KOD1)).